The following is a 632-amino-acid chain: Chaperone protein HtpG (632 aa).

Positions 1 to 339 (MTQQTMSFQA…SSDLPLNVSR (339 aa)) are a; substrate-binding. The tract at residues 340–559 (EILQESRDVK…DNDMSGYLQR (220 aa)) is b. The tract at residues 560–632 (MLKAAGQNAP…TNALLLSRAA (73 aa)) is c.

Belongs to the heat shock protein 90 family. In terms of assembly, homodimer.

It is found in the cytoplasm. In terms of biological role, molecular chaperone. Has ATPase activity. The sequence is that of Chaperone protein HtpG from Burkholderia thailandensis (strain ATCC 700388 / DSM 13276 / CCUG 48851 / CIP 106301 / E264).